The following is a 465-amino-acid chain: UDP-N-acetylmuramate--L-alanine ligase (465 aa).

Residue 115 to 121 (GAHGKTT) participates in ATP binding.

It belongs to the MurCDEF family.

It localises to the cytoplasm. It carries out the reaction UDP-N-acetyl-alpha-D-muramate + L-alanine + ATP = UDP-N-acetyl-alpha-D-muramoyl-L-alanine + ADP + phosphate + H(+). Its pathway is cell wall biogenesis; peptidoglycan biosynthesis. Cell wall formation. The protein is UDP-N-acetylmuramate--L-alanine ligase of Coxiella burnetii (strain CbuG_Q212) (Coxiella burnetii (strain Q212)).